The primary structure comprises 134 residues: MNKSFEIGTLLLRVITGIIFFVHGLSKFQGMEGTIQFFGSIGLPSFMAYVIAAIELIGGVLVFFGLATRIVGVLFALTLIGAIITVKLKAPFMGNAEFDYLLLLTSIHLALTGSRFLALDPFVFKGKKNGNVSA.

4 helical membrane passes run 5–25 (FEIG…VHGL), 46–66 (FMAY…FFGL), 70–90 (IVGV…KLKA), and 91–111 (PFMG…HLAL).

Belongs to the DoxX family.

It localises to the cell membrane. Functionally, essential for growth and viability in the presence of catechol and probably involved in the detoxification of catechol. This chain is Putative oxidoreductase CatD (catD), found in Bacillus subtilis (strain 168).